The chain runs to 251 residues: Ribosome maturation factor RimP (251 aa).

Positions 198–251 are disordered; that stretch reads NLGLEPPAAPHAKISEKTTKNTKPKKKPAPTNTKKHRLAAERARRGEIEPDEGD. Residues 217 to 234 show a composition bias toward basic residues; the sequence is KNTKPKKKPAPTNTKKHR. Positions 235 to 245 are enriched in basic and acidic residues; sequence LAAERARRGEI.

The protein belongs to the RimP family.

It localises to the cytoplasm. Its function is as follows. Required for maturation of 30S ribosomal subunits. This is Ribosome maturation factor RimP from Bradyrhizobium diazoefficiens (strain JCM 10833 / BCRC 13528 / IAM 13628 / NBRC 14792 / USDA 110).